We begin with the raw amino-acid sequence, 523 residues long: MTGGKWQDRVKSVEQRASSFQSSPLSCPYKPRLSQPWQPSSIWRLFPRQNAAIAFAQHIKQDVHIFSLEKEGSDAGQRIFLVTSYSELWHYYSTHRHSLMHCYEVILEGAVCKLYFDLEFHKASNKNLDGKMMVAKLIQYVCEKLEEVYGLHCSAKDVLDLDSSTSDKFSHHLIFMLPNAAFKDNSHVGRFIHDILHPALTNLKKSNPEAPGENRDDVEGTQAKRRKTEENDLGFLTVKNEKGQEQLFVDLGVYTKNRNFRLYKSSKLGKNAAFIVAEDNKFVPNPSKQITKDERIFLASLITNVSFTGQRILTYDMTQKSTAGSECPTLERESHSSDLLGDQKTSPFKEVDEFVLTLVCKDGIQGSIRRWNYFACEQLLVYDIEKFRWCHNVKRFHKSNNIIIVVDLKEEVWYQKCHDPECRRQNYRSSSFPLPQEVCMSHLLMEDEEDQAYLTDELGNIELAVTAPAESTSTTPSEDTEGWGDWPDDPAYLRALQEVEEEEEDEDEEVPDELLLQAVNECE.

Substrate contacts are provided by residues Arg-78, Asp-117 to Glu-119, and Lys-168 to His-172. Mn(2+)-binding residues include Asp-117 and Glu-119. The segment at Leu-203–Glu-230 is disordered. Substrate is bound by residues Arg-258–Arg-261 and Lys-267. The Zn(2+) site is built by Cys-390, His-397, Cys-417, and Cys-422. A Zinc knuckle motif motif is present at residues Cys-390–Arg-423. The span at Ala-467 to Ser-477 shows a compositional bias: low complexity. Residues Ala-467–Glu-523 form a disordered region. Composition is skewed to acidic residues over residues Glu-478–Asp-488 and Glu-498–Asp-512.

This sequence belongs to the eukaryotic-type primase small subunit family. Mn(2+) serves as cofactor.

It localises to the nucleus. The protein localises to the mitochondrion matrix. The protein resides in the chromosome. It carries out the reaction ssDNA + n NTP = ssDNA/pppN(pN)n-1 hybrid + (n-1) diphosphate.. It catalyses the reaction DNA(n) + a 2'-deoxyribonucleoside 5'-triphosphate = DNA(n+1) + diphosphate. In terms of biological role, DNA primase and DNA polymerase required to tolerate replication-stalling lesions by bypassing them. Required to facilitate mitochondrial and nuclear replication fork progression by initiating de novo DNA synthesis using dNTPs and acting as an error-prone DNA polymerase able to bypass certain DNA lesions. Shows a high capacity to tolerate DNA damage lesions such as 8oxoG and abasic sites in DNA. Provides different translesion synthesis alternatives when DNA replication is stalled: able to synthesize DNA primers downstream of lesions, such as UV lesions, R-loops and G-quadruplexes, to allow DNA replication to continue. Can also realign primers ahead of 'unreadable lesions' such as abasic sites and 6-4 photoproduct (6-4 pyrimidine-pyrimidinone), thereby skipping the lesion. Repriming avoids fork degradation while leading to accumulation of internal ssDNA gaps behind the forks. Also able to incorporate nucleotides opposite DNA lesions such as 8oxoG, like a regular translesion synthesis DNA polymerase. Also required for reinitiating stalled forks after ultraviolet (UV) damage during nuclear DNA replication. Required for mitochondrial DNA (mtDNA) synthesis and replication, by reinitiating synthesis after UV damage or in the presence of chain-terminating nucleotides. In addition to its role in DNA damage response, also required to maintain efficient nuclear and mitochondrial DNA replication in unperturbed cells. The sequence is that of DNA-directed primase/polymerase protein from Danio rerio (Zebrafish).